The primary structure comprises 250 residues: NADH-quinone oxidoreductase subunit C (250 aa).

Belongs to the complex I 30 kDa subunit family. In terms of assembly, NDH-1 is composed of 14 different subunits. Subunits NuoB, C, D, E, F, and G constitute the peripheral sector of the complex.

The protein localises to the cell inner membrane. The enzyme catalyses a quinone + NADH + 5 H(+)(in) = a quinol + NAD(+) + 4 H(+)(out). In terms of biological role, NDH-1 shuttles electrons from NADH, via FMN and iron-sulfur (Fe-S) centers, to quinones in the respiratory chain. The immediate electron acceptor for the enzyme in this species is believed to be ubiquinone. Couples the redox reaction to proton translocation (for every two electrons transferred, four hydrogen ions are translocated across the cytoplasmic membrane), and thus conserves the redox energy in a proton gradient. The sequence is that of NADH-quinone oxidoreductase subunit C from Xanthomonas euvesicatoria pv. vesicatoria (strain 85-10) (Xanthomonas campestris pv. vesicatoria).